A 431-amino-acid polypeptide reads, in one-letter code: tRNA(Ile)-lysidine synthase (431 aa).

26–31 (SGGIDS) serves as a coordination point for ATP.

The protein belongs to the tRNA(Ile)-lysidine synthase family.

It is found in the cytoplasm. It catalyses the reaction cytidine(34) in tRNA(Ile2) + L-lysine + ATP = lysidine(34) in tRNA(Ile2) + AMP + diphosphate + H(+). Functionally, ligates lysine onto the cytidine present at position 34 of the AUA codon-specific tRNA(Ile) that contains the anticodon CAU, in an ATP-dependent manner. Cytidine is converted to lysidine, thus changing the amino acid specificity of the tRNA from methionine to isoleucine. This chain is tRNA(Ile)-lysidine synthase, found in Wolbachia sp. subsp. Brugia malayi (strain TRS).